A 160-amino-acid polypeptide reads, in one-letter code: Baculoviral IAP repeat-containing protein 5.1-A (160 aa).

A BIR repeat occupies 27–97; that stretch reads RLATFADWPF…KRSANCGFLS (71 aa). At T43 the chain carries Phosphothreonine; by CDK1. Positions 66, 69, 86, and 93 each coordinate Zn(2+).

The protein belongs to the IAP family. As to quaternary structure, component of the CPC at least composed of survivin/birc5, incenp, cdca8/borealin and/or cdca9/dasra-A, and aurkb/aurora-B. Interacts directly with incenp (via N-terminus), and may weakly interact with aurkb (via N-terminus) to stabilize the complex. Interacts with GTP-bound ran in both the S and M phases of the cell cycle. Also found in a complex with ubiquitin-mediated signaling proteins including at least usp9x/xFAM, nploc4/npl4 and ufd1. Post-translationally, ubiquitination is required for centrosome-targeting.

It localises to the cytoplasm. It is found in the nucleus. The protein localises to the chromosome. Its subcellular location is the centromere. The protein resides in the cytoskeleton. It localises to the spindle. Its function is as follows. Component of the chromosomal passenger complex (CPC), a complex that acts as a key regulator of mitosis. The CPC complex has essential functions at the centromere in ensuring correct chromosome alignment and segregation and is required for chromatin-induced microtubule stabilization and spindle assembly. Stimulates the mitotic kinase activity of aurkb/aurora-B in the CPC. Does not appear to exhibit anti-apoptotic activity. The protein is Baculoviral IAP repeat-containing protein 5.1-A (birc5.1-a) of Xenopus laevis (African clawed frog).